The primary structure comprises 257 residues: Imidazole glycerol phosphate synthase subunit HisF (257 aa).

Catalysis depends on residues Asp-11 and Asp-130.

This sequence belongs to the HisA/HisF family. In terms of assembly, heterodimer of HisH and HisF.

Its subcellular location is the cytoplasm. The catalysed reaction is 5-[(5-phospho-1-deoxy-D-ribulos-1-ylimino)methylamino]-1-(5-phospho-beta-D-ribosyl)imidazole-4-carboxamide + L-glutamine = D-erythro-1-(imidazol-4-yl)glycerol 3-phosphate + 5-amino-1-(5-phospho-beta-D-ribosyl)imidazole-4-carboxamide + L-glutamate + H(+). It participates in amino-acid biosynthesis; L-histidine biosynthesis; L-histidine from 5-phospho-alpha-D-ribose 1-diphosphate: step 5/9. Its function is as follows. IGPS catalyzes the conversion of PRFAR and glutamine to IGP, AICAR and glutamate. The HisF subunit catalyzes the cyclization activity that produces IGP and AICAR from PRFAR using the ammonia provided by the HisH subunit. The sequence is that of Imidazole glycerol phosphate synthase subunit HisF from Shewanella frigidimarina (strain NCIMB 400).